Here is a 134-residue protein sequence, read N- to C-terminus: T-cell receptor alpha chain V region RL-5 (134 aa).

A signal peptide spans 1 to 20 (MFSASCSVTVVVLLITVRRT). A v segment region spans residues 21-114 (NGASVTQTEG…DSAVYYCALR (94 aa)). The j segment stretch occupies residues 115 to 134 (RGASNKLTLGTGTLLKVELN). N-linked (GlcNAc...) asparagine glycosylation occurs at N134.

In terms of processing, rearrangement with the C region would elongate the sequence with Ile-Thr-; which creates a potential N-glycosylation site at Asn-134.

This chain is T-cell receptor alpha chain V region RL-5, found in Oryctolagus cuniculus (Rabbit).